We begin with the raw amino-acid sequence, 291 residues long: Bifunctional protein FolD (291 aa).

Residues 168–170 (GRG), T195, and V236 contribute to the NADP(+) site.

The protein belongs to the tetrahydrofolate dehydrogenase/cyclohydrolase family. In terms of assembly, homodimer.

The catalysed reaction is (6R)-5,10-methylene-5,6,7,8-tetrahydrofolate + NADP(+) = (6R)-5,10-methenyltetrahydrofolate + NADPH. The enzyme catalyses (6R)-5,10-methenyltetrahydrofolate + H2O = (6R)-10-formyltetrahydrofolate + H(+). Its pathway is one-carbon metabolism; tetrahydrofolate interconversion. Functionally, catalyzes the oxidation of 5,10-methylenetetrahydrofolate to 5,10-methenyltetrahydrofolate and then the hydrolysis of 5,10-methenyltetrahydrofolate to 10-formyltetrahydrofolate. The polypeptide is Bifunctional protein FolD (Bifidobacterium adolescentis (strain ATCC 15703 / DSM 20083 / NCTC 11814 / E194a)).